Reading from the N-terminus, the 719-residue chain is Photosystem I P700 chlorophyll a apoprotein A1 (719 aa).

Helical transmembrane passes span 61–84, 147–170, 186–210, 282–300, 337–360, 376–402, 424–446, and 522–540; these read VFSA…FHGA, LYCT…FHYH, LNHH…HVSL, TAHH…GHMY, WHAQ…HHMY, LSLF…IFMV, AIVS…LYIH, and FLVH…LILL. Cysteine 564 and cysteine 573 together coordinate [4Fe-4S] cluster. The next 2 helical transmembrane spans lie at 580-601 and 655-677; these read HVFL…HFSW and LSAY…MFLF. A chlorophyll a'-binding site is contributed by histidine 666. Residues methionine 674 and tyrosine 682 each contribute to the chlorophyll a site. Tryptophan 683 lines the phylloquinone pocket. A helical transmembrane segment spans residues 715-719; sequence AVGVA.

Belongs to the PsaA/PsaB family. In terms of assembly, the PsaA/B heterodimer binds the P700 chlorophyll special pair and subsequent electron acceptors. PSI consists of a core antenna complex that captures photons, and an electron transfer chain that converts photonic excitation into a charge separation. The eukaryotic PSI reaction center is composed of at least 11 subunits. P700 is a chlorophyll a/chlorophyll a' dimer, A0 is one or more chlorophyll a, A1 is one or both phylloquinones and FX is a shared 4Fe-4S iron-sulfur center. serves as cofactor.

The protein localises to the plastid. Its subcellular location is the chloroplast thylakoid membrane. It catalyses the reaction reduced [plastocyanin] + hnu + oxidized [2Fe-2S]-[ferredoxin] = oxidized [plastocyanin] + reduced [2Fe-2S]-[ferredoxin]. In terms of biological role, psaA and PsaB bind P700, the primary electron donor of photosystem I (PSI), as well as the electron acceptors A0, A1 and FX. PSI is a plastocyanin-ferredoxin oxidoreductase, converting photonic excitation into a charge separation, which transfers an electron from the donor P700 chlorophyll pair to the spectroscopically characterized acceptors A0, A1, FX, FA and FB in turn. Oxidized P700 is reduced on the lumenal side of the thylakoid membrane by plastocyanin. The polypeptide is Photosystem I P700 chlorophyll a apoprotein A1 (Torreya californica (California nutmeg)).